Consider the following 335-residue polypeptide: F420-dependent glucose-6-phosphate dehydrogenase 1 (335 aa).

Position 38 (aspartate 38) interacts with coenzyme F420-(gamma-Glu)n. The active-site Proton donor is the histidine 39. Coenzyme F420-(gamma-Glu)n is bound by residues threonine 75 and threonine 106–glycine 107. Glutamate 108 (proton acceptor) is an active-site residue. Coenzyme F420-(gamma-Glu)n contacts are provided by residues asparagine 111, glycine 176 to glycine 177, and valine 179 to valine 180. Substrate contacts are provided by threonine 194, lysine 197, lysine 258, and arginine 282.

It belongs to the F420-dependent glucose-6-phosphate dehydrogenase family. In terms of assembly, homodimer.

The catalysed reaction is oxidized coenzyme F420-(gamma-L-Glu)(n) + D-glucose 6-phosphate + H(+) = 6-phospho-D-glucono-1,5-lactone + reduced coenzyme F420-(gamma-L-Glu)(n). Its function is as follows. Catalyzes the coenzyme F420-dependent oxidation of glucose 6-phosphate (G6P) to 6-phosphogluconolactone. The polypeptide is F420-dependent glucose-6-phosphate dehydrogenase 1 (Rhodococcus jostii (strain RHA1)).